The chain runs to 622 residues: Sodium-coupled monocarboxylate transporter 1 (622 aa).

At 1–15 the chain is on the extracellular side; the sequence is MVTPGNIGSFTVWDY. Residues 16-36 traverse the membrane as a helical segment; that stretch reads LVFALMLLISAVIGIYYAFAG. The Cytoplasmic portion of the chain corresponds to 37–51; the sequence is GGQKTSKDFLMGGRS. Residues 52-72 form a helical membrane-spanning segment; that stretch reads MTAVPVALSLTASFMSAVTVL. Over 73-83 the chain is Extracellular; the sequence is GTPAEVYRFGA. The helical transmembrane segment at 84 to 104 threads the bilayer; it reads MFIIFAFSYTIVVIISSEVFL. Topologically, residues 105-128 are cytoplasmic; it reads PVFYRLGITSTYEYLELRFNKFVR. The helical transmembrane segment at 129 to 149 threads the bilayer; it reads LLGTILFIIQTVLYTGIVIYA. Residues 150–161 lie on the Extracellular side of the membrane; that stretch reads PALALNQVTGFD. A helical transmembrane segment spans residues 162-182; the sequence is LWGAVVATGVVCTFYCTMGGL. The Cytoplasmic portion of the chain corresponds to 183–184; sequence KA. The helical transmembrane segment at 185–205 threads the bilayer; sequence VVWTDVFQVGIMVAGFTSVII. The Extracellular segment spans residues 206–241; it reads RAVVVQGGIGPILNDSYYGDRLNFWDFDPNPLKRHT. An N-linked (GlcNAc...) asparagine glycan is attached at Asn-219. The helical transmembrane segment at 242 to 262 threads the bilayer; it reads FWTIVVGGTFTWTGIYGVNQA. The Cytoplasmic portion of the chain corresponds to 263 to 283; the sequence is QVQRYIACKTRFQAKMSLYVN. Residues 284–304 traverse the membrane as a helical segment; that stretch reads LIGLWAILACAVLSGLAMYSI. The Extracellular portion of the chain corresponds to 305–336; that stretch reads YKDCDPWTAKFVSAPDQLMPYLALDILRDYPG. Residues 337 to 357 form a helical membrane-spanning segment; the sequence is LPGLFVSCAYSGTLSTVSSSI. Over 358–389 the chain is Cytoplasmic; that stretch reads NALAAVTVEDLIKPYIRSLSEKKMSWISKGTS. A helical transmembrane segment spans residues 390 to 410; that stretch reads LLYGAICIGMAGIASLMGGLL. Residues 411 to 415 lie on the Extracellular side of the membrane; the sequence is QAALS. A helical membrane pass occupies residues 416 to 436; the sequence is IFGMVGGPLLGLFSLGILFPF. Topologically, residues 437-438 are cytoplasmic; that stretch reads VN. A helical transmembrane segment spans residues 439–459; it reads SLGAVIGLLSGFAISLWVGIG. Over 460–521 the chain is Extracellular; that stretch reads SQIYAPSPSS…LADSWYSLSY (62 aa). N-linked (GlcNAc...) asparagine glycosylation is found at Asn-481 and Asn-488. Residues 522–542 form a helical membrane-spanning segment; that stretch reads LYFSTIGTIVAVLVGVIVSLL. The Cytoplasmic portion of the chain corresponds to 543–622; the sequence is SGGLKQNVNR…KGEKTNGITA (80 aa). A disordered region spans residues 591–622; sequence DNDMEQGTDNPAFNNMEMTSTEKGEKTNGITA. A compositionally biased stretch (polar residues) spans 595–609; that stretch reads EQGTDNPAFNNMEMT.

It belongs to the sodium:solute symporter (SSF) (TC 2.A.21) family. In the gastrula and neurula stages, expressed in the gastrula anterior endoderm and in the entire circumference of the blastopore lip superficial endoderm. At tailbud stages, abundant expression observed in the ventral midgut region. As development proceeds expression becomes restricted to the liver diverticulum and ultimately to the presumptive gallbladder, by tadpole stage 35. Also present in pronephros and the tip of the tail.

The protein resides in the apical cell membrane. It carries out the reaction (S)-lactate(out) + 2 Na(+)(out) = (S)-lactate(in) + 2 Na(+)(in). It catalyses the reaction propanoate(out) + 2 Na(+)(out) = propanoate(in) + 2 Na(+)(in). The enzyme catalyses pyruvate(out) + 2 Na(+)(out) = pyruvate(in) + 2 Na(+)(in). The catalysed reaction is acetate(out) + 2 Na(+)(out) = acetate(in) + 2 Na(+)(in). It carries out the reaction butanoate(out) + 2 Na(+)(out) = butanoate(in) + 2 Na(+)(in). It catalyses the reaction nicotinate(out) + 2 Na(+)(out) = nicotinate(in) + 2 Na(+)(in). The enzyme catalyses (R)-3-hydroxybutanoate(out) + 2 Na(+)(out) = (R)-3-hydroxybutanoate(in) + 2 Na(+)(in). The catalysed reaction is acetoacetate(out) + 2 Na(+)(out) = acetoacetate(in) + 2 Na(+)(in). It carries out the reaction 4-methyl-2-oxopentanoate(out) + 2 Na(+)(out) = 4-methyl-2-oxopentanoate(in) + 2 Na(+)(in). It catalyses the reaction 5-oxo-L-proline(out) + 2 Na(+)(out) = 5-oxo-L-proline(in) + 2 Na(+)(in). The enzyme catalyses iodide(out) = iodide(in). The catalysed reaction is chloride(in) = chloride(out). It carries out the reaction nitrate(in) = nitrate(out). It catalyses the reaction bromide(in) = bromide(out). In terms of biological role, acts as an electrogenic sodium (Na(+)) and chloride (Cl-)-dependent sodium-coupled solute transporter, including transport of monocarboxylates (short-chain fatty acids including L-lactate, D-lactate, pyruvate, acetate, propionate, valerate and butyrate), mocarboxylate drugs (nicotinate, benzoate, salicylate and 5-aminosalicylate) and ketone bodies (beta-D-hydroxybutyrate, acetoacetate and alpha-ketoisocaproate), with a Na(+):substrate stoichiometry of between 4:1 and 2:1. Catalyzes passive carrier mediated diffusion of iodide. Mediates iodide transport from the thyrocyte into the colloid lumen through the apical membrane. Mediates sodium-coupled electrogenic transport of pyroglutamate (5-oxo-L-proline). Can mediate the transport of chloride, bromide, iodide and nitrate ions when external concentration of sodium ions is reduced. The chain is Sodium-coupled monocarboxylate transporter 1 from Xenopus laevis (African clawed frog).